Reading from the N-terminus, the 147-residue chain is NADH-quinone oxidoreductase subunit A (147 aa).

3 consecutive transmembrane segments (helical) span residues 16–36 (FAIFLIVAIGLCCLMLVGGWF), 68–88 (FYLVAMFFVIFDVEALYLFAW), and 97–117 (WVGFVEAAIFIFVLLAGLVYL).

Belongs to the complex I subunit 3 family. As to quaternary structure, NDH-1 is composed of 13 different subunits. Subunits NuoA, H, J, K, L, M, N constitute the membrane sector of the complex.

Its subcellular location is the cell inner membrane. It carries out the reaction a quinone + NADH + 5 H(+)(in) = a quinol + NAD(+) + 4 H(+)(out). NDH-1 shuttles electrons from NADH, via FMN and iron-sulfur (Fe-S) centers, to quinones in the respiratory chain. The immediate electron acceptor for the enzyme in this species is believed to be ubiquinone. Couples the redox reaction to proton translocation (for every two electrons transferred, four hydrogen ions are translocated across the cytoplasmic membrane), and thus conserves the redox energy in a proton gradient. The chain is NADH-quinone oxidoreductase subunit A from Salmonella paratyphi A (strain ATCC 9150 / SARB42).